The chain runs to 165 residues: Endoribonuclease YbeY (165 aa).

Zn(2+)-binding residues include His130, His134, and His140.

This sequence belongs to the endoribonuclease YbeY family. Zn(2+) is required as a cofactor.

The protein resides in the cytoplasm. Functionally, single strand-specific metallo-endoribonuclease involved in late-stage 70S ribosome quality control and in maturation of the 3' terminus of the 16S rRNA. The chain is Endoribonuclease YbeY from Streptococcus gordonii (strain Challis / ATCC 35105 / BCRC 15272 / CH1 / DL1 / V288).